Reading from the N-terminus, the 200-residue chain is Chromophore lyase CpcT/CpeT 2 (200 aa).

Belongs to the CpcT/CpeT biliprotein lyase family.

In terms of biological role, covalently attaches a chromophore to Cys residue(s) of phycobiliproteins. This chain is Chromophore lyase CpcT/CpeT 2, found in Microcystis aeruginosa (strain NIES-843 / IAM M-2473).